A 665-amino-acid polypeptide reads, in one-letter code: F-box/LRR-repeat protein 3 (665 aa).

Residues 11–60 (KPFDLLSEELVFIILDLISPNPSDLKSFSLTCKSFYQLESKHRGSLKPLR) form the F-box domain. 21 LRR repeats span residues 61–81 (SDYL…DLTF), 82–108 (CPRV…DLSR), 109–134 (SGSF…DLSN), 135–159 (ATEM…KLGR), 160–185 (CKML…SLKW), 186–211 (CVGV…DLSY), 214–235 (ITGK…LLEG), 236–261 (CFGV…DASS), 262–287 (CQNL…DLSH), 288–312 (CSSV…IRLD), 313–338 (GCSV…SLSK), 339–364 (CVSV…DITC), 365–390 (CRKL…KMES), 391–416 (CSLV…DLTD), 419–440 (IDDE…KLGI), 441–466 (CLNI…DLYR), 467–492 (SVGI…NISY), 493–517 (CQDI…ESRG), 518–543 (CPNI…DLKK), 544–569 (CPSI…NVSD), and 594–619 (SSGL…KLHA).

The polypeptide is F-box/LRR-repeat protein 3 (FBL3) (Arabidopsis thaliana (Mouse-ear cress)).